Reading from the N-terminus, the 306-residue chain is WUSCHEL-related homeobox 13 (306 aa).

The span at 1-11 shows a compositional bias: pro residues; that stretch reads MMALGVPPPPS. Disordered regions lie at residues 1-20, 103-142, and 190-276; these read MMALGVPPPPSRAYVSGPLR, PRSHGHRTGGGGFSLKSSPFSSVGEERVPDPKPRRNPRPE, and SRSK…ARAT. A compositionally biased stretch (basic and acidic residues) spans 126 to 142; sequence GEERVPDPKPRRNPRPE. Positions 132 to 196 form a DNA-binding region, homeobox; WUS-type; that stretch reads DPKPRRNPRP…NRKSRSKNKL (65 aa). Gly residues predominate over residues 199–210; it reads GGTGRAGLGLGG. Residues 231–242 show a composition bias toward pro residues; sequence FTPPPILPPQPV. Residues 243–270 are compositionally biased toward low complexity; sequence QPQQQLVSPVAAPTSLSSSSSDRSSGSS.

The protein belongs to the WUS homeobox family.

It is found in the nucleus. In terms of biological role, transcription factor which may be involved in developmental processes. The polypeptide is WUSCHEL-related homeobox 13 (WOX13) (Oryza sativa subsp. japonica (Rice)).